Consider the following 264-residue polypeptide: DNA-directed RNA polymerase subunit Rpo3 (264 aa).

3 residues coordinate [3Fe-4S] cluster: Cys-203, Cys-206, and Cys-209.

This sequence belongs to the archaeal Rpo3/eukaryotic RPB3 RNA polymerase subunit family. As to quaternary structure, part of the RNA polymerase complex. [3Fe-4S] cluster serves as cofactor.

The protein localises to the cytoplasm. It carries out the reaction RNA(n) + a ribonucleoside 5'-triphosphate = RNA(n+1) + diphosphate. Its function is as follows. DNA-dependent RNA polymerase (RNAP) catalyzes the transcription of DNA into RNA using the four ribonucleoside triphosphates as substrates. This is DNA-directed RNA polymerase subunit Rpo3 from Archaeoglobus fulgidus (strain ATCC 49558 / DSM 4304 / JCM 9628 / NBRC 100126 / VC-16).